Here is a 166-residue protein sequence, read N- to C-terminus: UPF0254 protein Maeo_0668 (166 aa).

Belongs to the UPF0254 family.

This Methanococcus aeolicus (strain ATCC BAA-1280 / DSM 17508 / OCM 812 / Nankai-3) protein is UPF0254 protein Maeo_0668.